The sequence spans 268 residues: Nickel import ATP-binding protein NikE (268 aa).

An ABC transporter domain is found at 4–252 (LNVSDLSHHY…SSDAGRVLQN (249 aa)). 45 to 52 (GRSGCGKS) lines the ATP pocket.

The protein belongs to the ABC transporter superfamily. Nickel importer (TC 3.A.1.5.3) family. The complex is composed of two ATP-binding proteins (NikD and NikE), two transmembrane proteins (NikB and NikC) and a solute-binding protein (NikA).

It is found in the cell inner membrane. The enzyme catalyses Ni(2+)(out) + ATP + H2O = Ni(2+)(in) + ADP + phosphate + H(+). Part of the ABC transporter complex NikABCDE involved in nickel import. Responsible for energy coupling to the transport system. The polypeptide is Nickel import ATP-binding protein NikE (Escherichia coli O6:K15:H31 (strain 536 / UPEC)).